The chain runs to 461 residues: MSSKNKELLWQSRFSLPFDRDALRFSSSVHVDKALYREDIQGSIAHVTMLAEQQIVSHEEAQAIIAGLQEIELELRDGNIVPHWEDEDIHTVIENRLKEKIGAVAGKLHSGRSRNDQVATDTRLYLRRNIGSLQAALSELLTVLLQKAEHYCDTIIFGYTHLQRAQPISAGHYYMAYFTMFLRDRDRLQDLLKRVNISPLGAAAFAGSTLPLNPARSAELLGFEGIFSNSIDAVSDRDILIEFLSDCAMVMMHLSRFAEDVILWSSYEFGYLEISDAFATGSSLMPQKKNADIAELVRGKAGRVYGNLMAMLTIMKGLPLSYNRDMQEDKQPLFDSTETAINSVTIFSKMLENTRLKEERLAKLTSEDLSLATEIAEYLVQKHIPFRDAHRITGKIVSWSIESGVALPHIPLEQFKSFAAEFDEGIYACLKADASVRAKKTHGSCSFESVKQQINAAKERI.

This sequence belongs to the lyase 1 family. Argininosuccinate lyase subfamily.

It localises to the cytoplasm. The enzyme catalyses 2-(N(omega)-L-arginino)succinate = fumarate + L-arginine. Its pathway is amino-acid biosynthesis; L-arginine biosynthesis; L-arginine from L-ornithine and carbamoyl phosphate: step 3/3. This is Argininosuccinate lyase from Chlorobium chlorochromatii (strain CaD3).